The primary structure comprises 1265 residues: Guanine nucleotide exchange factor SDC25 (1265 aa).

Residues 26 to 97 (QPIDVVECTY…PPSFTRSILN (72 aa)) form the SH3 domain. Disordered stretches follow at residues 409 to 454 (IPAS…DTIW) and 623 to 648 (LNLD…DEYE). Residues 416–428 (TSCSSETSHHSPS) show a composition bias toward low complexity. In terms of domain architecture, N-terminal Ras-GEF spans 782–914 (SNNRIKGGSK…LLKEVNQKFK (133 aa)). In terms of domain architecture, Ras-GEF spans 952–1199 (DPVLFATQLT…YQLSLIIEPK (248 aa)). The interval 1201 to 1252 (RKKVVPNSNSNNKSQEKSRDDQTDEGKTSTKKDRFSKFQLHKTKKKAPKVSK) is disordered. Residues 1214-1236 (SQEKSRDDQTDEGKTSTKKDRFS) are compositionally biased toward basic and acidic residues. Basic residues predominate over residues 1239-1252 (QLHKTKKKAPKVSK).

In terms of biological role, promotes the exchange of Ras-bound GDP by GTP. This is Guanine nucleotide exchange factor SDC25 (SDC25) from Saccharomyces cerevisiae (strain AWRI1631) (Baker's yeast).